A 183-amino-acid polypeptide reads, in one-letter code: Bifunctional protein PyrR (183 aa).

Positions V102–T114 match the PRPP-binding motif.

Belongs to the purine/pyrimidine phosphoribosyltransferase family. PyrR subfamily. In terms of assembly, homodimer and homohexamer; in equilibrium.

It catalyses the reaction UMP + diphosphate = 5-phospho-alpha-D-ribose 1-diphosphate + uracil. Regulates transcriptional attenuation of the pyrimidine nucleotide (pyr) operon by binding in a uridine-dependent manner to specific sites on pyr mRNA. This disrupts an antiterminator hairpin in the RNA and favors formation of a downstream transcription terminator, leading to a reduced expression of downstream genes. In terms of biological role, also displays a weak uracil phosphoribosyltransferase activity which is not physiologically significant. The protein is Bifunctional protein PyrR of Listeria monocytogenes serotype 4a (strain HCC23).